A 352-amino-acid chain; its full sequence is Histidinol-phosphate aminotransferase (352 aa).

Lysine 211 is subject to N6-(pyridoxal phosphate)lysine.

It belongs to the class-II pyridoxal-phosphate-dependent aminotransferase family. Histidinol-phosphate aminotransferase subfamily. Homodimer. The cofactor is pyridoxal 5'-phosphate.

It carries out the reaction L-histidinol phosphate + 2-oxoglutarate = 3-(imidazol-4-yl)-2-oxopropyl phosphate + L-glutamate. The protein operates within amino-acid biosynthesis; L-histidine biosynthesis; L-histidine from 5-phospho-alpha-D-ribose 1-diphosphate: step 7/9. The sequence is that of Histidinol-phosphate aminotransferase from Haemophilus influenzae (strain PittGG).